We begin with the raw amino-acid sequence, 102 residues long: ATP-dependent Clp protease adapter protein ClpS (102 aa).

It belongs to the ClpS family. In terms of assembly, binds to the N-terminal domain of the chaperone ClpA.

Functionally, involved in the modulation of the specificity of the ClpAP-mediated ATP-dependent protein degradation. This is ATP-dependent Clp protease adapter protein ClpS from Shewanella sediminis (strain HAW-EB3).